A 443-amino-acid chain; its full sequence is Phosphoglucosamine mutase (443 aa).

The Phosphoserine intermediate role is filled by serine 100. Mg(2+)-binding residues include serine 100, aspartate 239, aspartate 241, and aspartate 243. At serine 100 the chain carries Phosphoserine.

Belongs to the phosphohexose mutase family. Requires Mg(2+) as cofactor. In terms of processing, activated by phosphorylation.

The enzyme catalyses alpha-D-glucosamine 1-phosphate = D-glucosamine 6-phosphate. Functionally, catalyzes the conversion of glucosamine-6-phosphate to glucosamine-1-phosphate. This is Phosphoglucosamine mutase from Shewanella loihica (strain ATCC BAA-1088 / PV-4).